Reading from the N-terminus, the 514-residue chain is Synaptic vesicular amine transporter (514 aa).

Topologically, residues 1-20 (MALSELALVRWLQESRRSRK) are cytoplasmic. A helical membrane pass occupies residues 21–41 (LILFIVFLALLLDNMLLTVVV). Residues 42-129 (PIIPSYLYSI…EDKDLLNENV (88 aa)) lie on the Lumenal, vesicle side of the membrane. N-linked (GlcNAc...) asparagine glycosylation is found at Asn-84 and Asn-91. Cysteines 117 and 324 form a disulfide. A helical membrane pass occupies residues 130–150 (QVGLLFASKATVQLITNPFIG). Residues 151–159 (LLTNRIGYP) are Cytoplasmic-facing. The chain crosses the membrane as a helical span at residues 160-180 (IPIFAGFCIMFVSTIMFAFSS). Over 181–189 (SYAFLLIAR) the chain is Lumenal, vesicle. A helical transmembrane segment spans residues 190-210 (SLQGIGSSCSSVAGMGMLASV). At 211–219 (YTDDEERGN) the chain is on the cytoplasmic side. A helical membrane pass occupies residues 220–242 (VMGIALGGLAMGVLVGPPFGSVL). Serotonin-binding residues include Leu-228 and Val-232. The Lumenal, vesicle segment spans residues 243-248 (YEFVGK). A helical membrane pass occupies residues 249-271 (TAPFLVLAALVLLDGAIQLFVLQ). At 272–291 (PSRVQPESQKGTPLTTLLKD) the chain is on the cytoplasmic side. The chain crosses the membrane as a helical span at residues 292-311 (PYILIAAGSICFANMGIAML). 5 residues coordinate serotonin: Asn-305, Ile-308, Glu-312, Phe-334, and Tyr-341. Residues 312 to 328 (EPALPIWMMETMCSRKW) are Lumenal, vesicle-facing. The chain crosses the membrane as a helical span at residues 329–352 (QLGVAFLPASISYLIGTNIFGILA). Over 353-357 (HKMGR) the chain is Cytoplasmic. A helical transmembrane segment spans residues 358–378 (WLCALLGMIIVGVSILCIPFA). The Lumenal, vesicle portion of the chain corresponds to 379–389 (KNIYGLIAPNF). The chain crosses the membrane as a helical span at residues 390–410 (GVGFAIGMVDSSMMPIMGYLV). Asp-399 is a serotonin binding site. At 411–414 (DLRH) the chain is on the cytoplasmic side. The chain crosses the membrane as a helical span at residues 415–435 (VSVYGSVYAIADVAFCMGYAI). Tyr-433 serves as a coordination point for serotonin. The Lumenal, vesicle portion of the chain corresponds to 436 to 440 (GPSAG). The helical transmembrane segment at 441–462 (GAIAKAIGFPWLMTIIGIIDIL) threads the bilayer. Over 463–514 (FAPLCFFLRSPPAKEEKMAILMDHNCPIKTKMYTQNNIQSYPIGEDEESESD) the chain is Cytoplasmic. A phosphoserine mark is found at Ser-511 and Ser-513.

This sequence belongs to the major facilitator superfamily. Vesicular transporter family. Interacts with SLC6A3. Expressed in neuronal and neuroendocrine tissues. Detected in central and peripheral nervous system in particular in axonal and dendritic processes in dopaminergic cells of substantia nigra, histaminergic neuronal cell bodies of substantia nigra and tuberomammillary nucleus, in ganglion cells of sympathetic glia and in peripheral sympathetic nerve terminals in stomach and duodenum (at protein level). Highly expressed in chromaffin cells of the adrenal medulla and histamine-storing enterochromaffin-like cells of oxyntic mucosa (at protein level).

It is found in the cytoplasmic vesicle. It localises to the secretory vesicle. The protein resides in the synaptic vesicle membrane. The protein localises to the secretory vesicle membrane. Its subcellular location is the cell projection. It is found in the axon. It localises to the dendrite. It carries out the reaction serotonin(in) + 2 H(+)(out) = serotonin(out) + 2 H(+)(in). It catalyses the reaction dopamine(in) + 2 H(+)(out) = dopamine(out) + 2 H(+)(in). The catalysed reaction is histamine(in) + 2 H(+)(out) = histamine(out) + 2 H(+)(in). With respect to regulation, strongly inhibited by reserpine and tetrabenazine. Also inhibited to a lesser extent by ketanserin and fenfluramine. Reserpine and ketanserin inhibit by blocking the substrate-binding pocket. Tetrabenazine traps SLC18A2/VMAT2 in an occluded conformation and its inhibition is specific to SLC18A2/VMAT2 but not SLC18A1/VMAT1. Its function is as follows. Electrogenic antiporter that exchanges one cationic monoamine with two intravesicular protons across the membrane of secretory and synaptic vesicles. Uses the electrochemical proton gradient established by the V-type proton-pump ATPase to accumulate high concentrations of monoamines inside the vesicles prior to their release via exocytosis. Transports a variety of catecholamines such as dopamine, adrenaline and noradrenaline, histamine, and indolamines such as serotonin. Regulates the transvesicular monoaminergic gradient that determines the quantal size. Mediates somatodendritic dopamine release in hippocampal neurons, likely as part of a regulated secretory pathway that integrates retrograde synaptic signals. Acts as a primary transporter for striatal dopamine loading ensuring impulse-dependent release of dopamine at the synaptic cleft. Responsible for histamine and serotonin storage and subsequent corelease from mast cell granules. In Homo sapiens (Human), this protein is Synaptic vesicular amine transporter (SLC18A2).